Consider the following 535-residue polypeptide: E3 ubiquitin-protein ligase rnf168 (535 aa).

Residues cysteine 16–arginine 55 form an RING-type zinc finger. The LR motif 1 signature appears at leucine 112–glutamate 130. Residues glutamate 145–alanine 153 carry the UMI motif motif. Short sequence motifs (MIU motif) lie at residues isoleucine 170–alanine 193 and arginine 406–lysine 429. Residues lysine 429–leucine 443 are compositionally biased toward basic and acidic residues. Residues lysine 429–lysine 535 form a disordered region. An LR motif 2 motif is present at residues arginine 433–arginine 444. Composition is skewed to polar residues over residues asparagine 462–tyrosine 478 and isoleucine 492–glutamate 507.

The protein belongs to the RNF168 family. Monomer.

The protein localises to the nucleus. The catalysed reaction is S-ubiquitinyl-[E2 ubiquitin-conjugating enzyme]-L-cysteine + [acceptor protein]-L-lysine = [E2 ubiquitin-conjugating enzyme]-L-cysteine + N(6)-ubiquitinyl-[acceptor protein]-L-lysine.. It functions in the pathway protein modification; protein ubiquitination. Its function is as follows. E3 ubiquitin-protein ligase required for accumulation of repair proteins to sites of DNA damage. Acts with ube2n/ubc13 to amplify the rnf8-dependent histone ubiquitination. Recruited to sites of DNA damage at double-strand breaks (DSBs) by binding to ubiquitinated histone H2A and ubiquitinates histone H2A and H2AX, leading to amplify the rnf8-dependent H2A ubiquitination and promoting the formation of 'Lys-63'-linked ubiquitin conjugates. This leads to concentrate ubiquitinated histones H2A and H2AX at DNA lesions to the threshold required for recruitment of tp53bp1 and brca1. Catalyzes monoubiquitination of 'Lys-13' and 'Lys-15' of nucleosomal histone H2A (H2AK13Ub and H2AK15Ub, respectively). The sequence is that of E3 ubiquitin-protein ligase rnf168 from Xenopus tropicalis (Western clawed frog).